A 462-amino-acid polypeptide reads, in one-letter code: Hydroxymethylglutaryl-CoA synthase (462 aa).

E86 (proton donor/acceptor) is an active-site residue. The active-site Acyl-thioester intermediate is the C120. Positions 120, 211, 261, 270, 338, and 372 each coordinate (3S)-3-hydroxy-3-methylglutaryl-CoA. H261 functions as the Proton donor/acceptor in the catalytic mechanism.

The protein belongs to the thiolase-like superfamily. HMG-CoA synthase family.

The enzyme catalyses acetoacetyl-CoA + acetyl-CoA + H2O = (3S)-3-hydroxy-3-methylglutaryl-CoA + CoA + H(+). The protein operates within siderophore biosynthesis. Functionally, hydroxymethylglutaryl-CoA synthase involved in the biosynthesis of siderophore ferrichrome A which is contributing to organismal virulence. The first step of ferrichrome A biosynthesis is performed by the HMG-CoA synthase hcs1 which catalyzes the generation of HMG-CoA and CoA using acetoacetyl-CoA and acetyl-CoA as substrates. The enoyl-CoA isomerase/hydratase fer4 then catalyzes the conversion of hcs1-produced HMG-CoA to methylglutaconyl-CoA. The acyltransferase fer5 then fuses the fer4-generated methylglutaconyl-CoA with sid1-generated hydroxyornithine to yield methylglutaconyl hydroxyornithine. Methylglutaconyl hydroxyornithine is then available for use by the NRPS fer3 to generate ferrichrome A. The sequence is that of Hydroxymethylglutaryl-CoA synthase from Mycosarcoma maydis (Corn smut fungus).